A 524-amino-acid chain; its full sequence is MSKNTEGMGRAVVIGAGLGGLAAAMRLGAKGYKVTVVDRLDRPGGRGSSITKGGHRFDLGPTIVTVPDRLRELWADCGRDFDKDVSLVPMEPFYTIDFPDGEKYTAYGDDAKVKAEVARISPGDVEGFRHFMWDAKARYEFGYENLGRKPMSKLWDLIKVLPTFGWLRADRSVYGHAKKMVKDDHLRFALSFHPLFIGGDPFHVTSMYILVSQLEKKFGVHYAIGGVQAIADAMAKVITDQGGEMRLNTEVDEILVSRDGKATGIRLMDGTELPAQVVVSNADAGHTYKRLLRNRDRWRWTDEKLDKKRWSMGLFVWYFGTKGTAKMWKDVGHHTVVVGPRYKEHVQDIFIKGELAEDMSLYVHRPSVTDPTAAPKGDDTFYVLSPVPNLGFDNGVDWSVEAEKYKAKVLKVIEERLLPGVAEKITEEVVFTPETFRDRYLSPLGAGFSLEPRILQSAWFRPHNASEEVDGLYLVGAGTHPGAGVPSVIGSGELVAQMIPDAPKPETPAAAAPKARTPRAKAAQ.

12–45 (VVIGAGLGGLAAAMRLGAKGYKVTVVDRLDRPGG) provides a ligand contact to FAD. Residues 500–524 (PDAPKPETPAAAAPKARTPRAKAAQ) are disordered. Low complexity predominate over residues 507–524 (TPAAAAPKARTPRAKAAQ).

Belongs to the carotenoid/retinoid oxidoreductase family. Requires FAD as cofactor.

It catalyses the reaction 15-cis-phytoene + 3 A = all-trans-neurosporene + 3 AH2. It participates in carotenoid biosynthesis. Is inhibited by diphenylamine (DPA). Is also slightly inhibited by NAD, NADP or ATP in the presence of FAD. Functionally, converts phytoene into all-trans-neurosporene as the major product, via the intermediary of phytofluene and zeta-carotene, by the introduction of three double bonds. Both intermediates, phytofluene and zeta-carotene, can be used as substrates and converted to neurosporene. 1,2-epoxy phytoene is also a suitable substrate whereas the C30 diapophytoene is not. The sequence is that of Phytoene desaturase (neurosporene-forming) (crtI) from Rhodobacter capsulatus (strain ATCC BAA-309 / NBRC 16581 / SB1003).